A 245-amino-acid chain; its full sequence is 1-(5-phosphoribosyl)-5-[(5-phosphoribosylamino)methylideneamino] imidazole-4-carboxamide isomerase (245 aa).

The active-site Proton acceptor is the Asp-7. Asp-129 functions as the Proton donor in the catalytic mechanism.

The protein belongs to the HisA/HisF family.

The protein localises to the cytoplasm. The catalysed reaction is 1-(5-phospho-beta-D-ribosyl)-5-[(5-phospho-beta-D-ribosylamino)methylideneamino]imidazole-4-carboxamide = 5-[(5-phospho-1-deoxy-D-ribulos-1-ylimino)methylamino]-1-(5-phospho-beta-D-ribosyl)imidazole-4-carboxamide. Its pathway is amino-acid biosynthesis; L-histidine biosynthesis; L-histidine from 5-phospho-alpha-D-ribose 1-diphosphate: step 4/9. This Shewanella sp. (strain ANA-3) protein is 1-(5-phosphoribosyl)-5-[(5-phosphoribosylamino)methylideneamino] imidazole-4-carboxamide isomerase.